The chain runs to 376 residues: General transcription factor IIH subunit 2 (376 aa).

In terms of domain architecture, VWFA spans 64-206 (HVMIVIDCSR…NIRCSAIGLS (143 aa)). The segment at 286–303 (CTQCGARHCSIPAECPVC) adopts a C4-type zinc-finger fold.

It belongs to the GTF2H2 family. As to quaternary structure, component of the 7-subunit TFIIH core complex composed of xpb-1, xpd-1, gtf-2H1, gtf-2H2C, gtf-2H3, Y73F8A.24 and gtf-2H5, which is active in NER. The core complex associates with the 3-subunit CDK-activating kinase (CAK) module composed of cyh-1, cdk-7 and mnat-1 to form the 10-subunit holoenzyme (holo-TFIIH) active in transcription.

Its subcellular location is the nucleus. Component of the general transcription and DNA repair factor IIH (TFIIH) core complex, which is involved in general and transcription-coupled nucleotide excision repair (NER) of damaged DNA and, when complexed to CAK, in RNA transcription by RNA polymerase II. In NER, TFIIH acts by opening DNA around the lesion to allow the excision of the damaged oligonucleotide and its replacement by a new DNA fragment. In transcription, TFIIH has an essential role in transcription initiation. When the pre-initiation complex (PIC) has been established, TFIIH is required for promoter opening and promoter escape. Phosphorylation of the C-terminal tail (CTD) of the largest subunit of RNA polymerase II by the kinase module CAK controls the initiation of transcription. This chain is General transcription factor IIH subunit 2, found in Caenorhabditis elegans.